Reading from the N-terminus, the 317-residue chain is Ventral anterior homeobox 1 (317 aa).

The interval Met1–Asp62 is disordered. Residues Gly18–Asp27 are compositionally biased toward basic and acidic residues. Residues Pro92–Gln151 constitute a DNA-binding region (homeobox). The interval Gly203 to Gly248 is disordered. The segment covering Gly212–Ser225 has biased composition (low complexity). Residues Thr236–Gln247 show a composition bias toward polar residues.

The protein belongs to the EMX homeobox family. In terms of tissue distribution, expressed in the anterior neural keel and later in the preoptic area and optic stalk.

The protein localises to the nucleus. Transcription factor that is required for closure of the choroid fissure and together with Vax2 is required for optic nerve differentiation and to limit retinal development to the optic cup. The chain is Ventral anterior homeobox 1 (vax1) from Danio rerio (Zebrafish).